Consider the following 179-residue polypeptide: Large ribosomal subunit protein uL5 (179 aa).

It belongs to the universal ribosomal protein uL5 family. As to quaternary structure, part of the 50S ribosomal subunit; part of the 5S rRNA/L5/L18/L25 subcomplex. Contacts the 5S rRNA and the P site tRNA. Forms a bridge to the 30S subunit in the 70S ribosome.

This is one of the proteins that bind and probably mediate the attachment of the 5S RNA into the large ribosomal subunit, where it forms part of the central protuberance. In the 70S ribosome it contacts protein S13 of the 30S subunit (bridge B1b), connecting the 2 subunits; this bridge is implicated in subunit movement. Contacts the P site tRNA; the 5S rRNA and some of its associated proteins might help stabilize positioning of ribosome-bound tRNAs. This chain is Large ribosomal subunit protein uL5, found in Aliivibrio salmonicida (strain LFI1238) (Vibrio salmonicida (strain LFI1238)).